A 100-amino-acid chain; its full sequence is Putative septation protein SpoVG (100 aa).

Belongs to the SpoVG family.

Could be involved in septation. The chain is Putative septation protein SpoVG from Staphylococcus haemolyticus (strain JCSC1435).